A 300-amino-acid chain; its full sequence is Ribosomal protein L11 methyltransferase (300 aa).

Residues T148, G171, D193, and N235 each coordinate S-adenosyl-L-methionine.

The protein belongs to the methyltransferase superfamily. PrmA family.

The protein resides in the cytoplasm. It carries out the reaction L-lysyl-[protein] + 3 S-adenosyl-L-methionine = N(6),N(6),N(6)-trimethyl-L-lysyl-[protein] + 3 S-adenosyl-L-homocysteine + 3 H(+). Functionally, methylates ribosomal protein L11. This Desulfotalea psychrophila (strain LSv54 / DSM 12343) protein is Ribosomal protein L11 methyltransferase.